The following is a 222-amino-acid chain: Pyridoxine/pyridoxamine 5'-phosphate oxidase (222 aa).

Residues 71–76, 86–87, Lys93, and Gln115 contribute to the FMN site; these read RMVLLK and YT. Residue Lys76 coordinates substrate. 3 residues coordinate substrate: Tyr133, Arg137, and Ser141. Residues 150–151 and Trp195 each bind FMN; that span reads QS. Residue 201 to 203 coordinates substrate; it reads RLH. Arg205 is an FMN binding site.

It belongs to the pyridoxamine 5'-phosphate oxidase family. As to quaternary structure, homodimer. It depends on FMN as a cofactor.

The catalysed reaction is pyridoxamine 5'-phosphate + O2 + H2O = pyridoxal 5'-phosphate + H2O2 + NH4(+). It carries out the reaction pyridoxine 5'-phosphate + O2 = pyridoxal 5'-phosphate + H2O2. Its pathway is cofactor metabolism; pyridoxal 5'-phosphate salvage; pyridoxal 5'-phosphate from pyridoxamine 5'-phosphate: step 1/1. It functions in the pathway cofactor metabolism; pyridoxal 5'-phosphate salvage; pyridoxal 5'-phosphate from pyridoxine 5'-phosphate: step 1/1. In terms of biological role, catalyzes the oxidation of either pyridoxine 5'-phosphate (PNP) or pyridoxamine 5'-phosphate (PMP) into pyridoxal 5'-phosphate (PLP). The sequence is that of Pyridoxine/pyridoxamine 5'-phosphate oxidase from Caulobacter vibrioides (strain ATCC 19089 / CIP 103742 / CB 15) (Caulobacter crescentus).